The primary structure comprises 141 residues: Protein NrdI (141 aa).

The protein belongs to the NrdI family.

In terms of biological role, probably involved in ribonucleotide reductase function. This chain is Protein NrdI, found in Wigglesworthia glossinidia brevipalpis.